The primary structure comprises 1577 residues: Vacuolar protein sorting/targeting protein PEP1 (1577 aa).

The signal sequence occupies residues 1-21 (MILLHFVYSLWALLLIPLINA). Topologically, residues 22 to 1391 (EEFTPKVTKT…EFKEKYSVSA (1370 aa)) are lumenal. BNR repeat units follow at residues 58-68 (ISFDDGETWEK) and 101-111 (YITNDQGKSWE). N-linked (GlcNAc...) asparagine glycosylation is found at asparagine 121 and asparagine 168. BNR repeat units follow at residues 179–187 (SNDGGKSFS) and 414–423 (ISVDNGLTWT). N-linked (GlcNAc...) asparagine glycosylation is present at asparagine 445. BNR repeat units follow at residues 485 to 495 (FISRDGGLTWK), 531 to 541 (YYSLDQGKTWT), and 762 to 771 (YISHDGGQTI). N-linked (GlcNAc...) asparagine glycosylation is present at asparagine 791. Residues 859-869 (YLTNDGGETFT) form a BNR 8 repeat. Asparagine 1008 is a glycosylation site (N-linked (GlcNAc...) asparagine). BNR repeat units lie at residues 1141-1150 (FFTTDGGETW) and 1183-1192 (YSTDFGKTWK). N-linked (GlcNAc...) asparagine glycosylation is present at asparagine 1301. Residues 1392–1412 (GPFAFIFISILLIIFFAAWFV) form a helical membrane-spanning segment. Residues 1413–1577 (YDRGIRRNGG…DSTAPSNENQ (165 aa)) lie on the Cytoplasmic side of the membrane. A disordered region spans residues 1531–1577 (DDVPTLEEEHTSYTDQPTTTDVPDALPEGNEENIDRPDSTAPSNENQ).

The protein belongs to the VPS10-related sortilin family.

Its subcellular location is the golgi apparatus. The protein resides in the trans-Golgi network membrane. It localises to the prevacuolar compartment membrane. In terms of biological role, functions as a sorting receptor in the Golgi compartment required for the intracellular sorting and delivery of soluble vacuolar proteins, like carboxypeptidase Y (CPY) and proteinase A. Executes multiple rounds of sorting by cycling between the late Golgi and a prevacuolar endosome-like compartment. Binds the Golgi-modified P2 form of CPY, and this interaction is dependent on the presence of an intact CPY vacuolar protein sorting signal. The chain is Vacuolar protein sorting/targeting protein PEP1 (PEP1) from Saccharomyces cerevisiae (strain JAY291) (Baker's yeast).